The chain runs to 342 residues: Fructose-1,6-bisphosphatase class 1 (342 aa).

Glutamate 97, aspartate 119, leucine 121, and aspartate 122 together coordinate Mg(2+). Substrate is bound by residues 122–125 (DGSS), asparagine 215, tyrosine 247, and lysine 280. Glutamate 286 provides a ligand contact to Mg(2+).

The protein belongs to the FBPase class 1 family. In terms of assembly, homotetramer. Mg(2+) is required as a cofactor.

The protein resides in the cytoplasm. It carries out the reaction beta-D-fructose 1,6-bisphosphate + H2O = beta-D-fructose 6-phosphate + phosphate. It participates in carbohydrate biosynthesis; gluconeogenesis. This is Fructose-1,6-bisphosphatase class 1 from Leptospira borgpetersenii serovar Hardjo-bovis (strain JB197).